We begin with the raw amino-acid sequence, 361 residues long: sn-glycerol-3-phosphate import ATP-binding protein UgpC (361 aa).

Positions 4–235 constitute an ABC transporter domain; it reads LSLKGVRKSY…PATVFVAGFI (232 aa). ATP is bound at residue 37–44; that stretch reads GPSGCGKS.

The protein belongs to the ABC transporter superfamily. sn-glycerol-3-phosphate importer (TC 3.A.1.1.3) family. In terms of assembly, the complex is composed of two ATP-binding proteins (UgpC), two transmembrane proteins (UgpA and UgpE) and a solute-binding protein (UgpB).

The protein resides in the cell inner membrane. The enzyme catalyses sn-glycerol 3-phosphate(out) + ATP + H2O = sn-glycerol 3-phosphate(in) + ADP + phosphate + H(+). In terms of biological role, part of the ABC transporter complex UgpBAEC involved in sn-glycerol-3-phosphate (G3P) import. Responsible for energy coupling to the transport system. The sequence is that of sn-glycerol-3-phosphate import ATP-binding protein UgpC from Burkholderia lata (strain ATCC 17760 / DSM 23089 / LMG 22485 / NCIMB 9086 / R18194 / 383).